Reading from the N-terminus, the 223-residue chain is UPF0758 protein Plut_0598 (223 aa).

Positions 100 to 222 (RVQGAKDVFE…WFSFRESNLL (123 aa)) constitute an MPN domain. Zn(2+) contacts are provided by histidine 171, histidine 173, and aspartate 184. A JAMM motif motif is present at residues 171-184 (HNHPSGDTEPSNAD).

The protein belongs to the UPF0758 family.

This chain is UPF0758 protein Plut_0598, found in Chlorobium luteolum (strain DSM 273 / BCRC 81028 / 2530) (Pelodictyon luteolum).